Reading from the N-terminus, the 565-residue chain is Perivitellin-2 67 kDa subunit (565 aa).

The signal sequence occupies residues 1–26 (MSQLRWWVVSQVLLLIAICSLDHSEG). One can recognise an MACPF domain in the interval 27-340 (ARVCPKIVPG…AKVANLDRLT (314 aa)). The invertebrate MACPF Accessory Domain (IMAD) stretch occupies residues 387–565 (VPAWFSDRTT…CGMSWALIAK (179 aa)).

As to quaternary structure, perivitellin-2 is a dimer of heterodimers held together head-to-tail by non-covalent forces. The heterodimer is composed of the tachylectin subunit (31 kDa) and the MACPF subunit (67 kDa) that are disulfide-linked. In terms of processing, PV2 is a very high density lipoprotein (VHDL). It contains 3.75% of lipids. The major lipid classes are free sterols and phospholipids and also have significant quantities of energy-providing triacylglycerides and free fatty acids. In terms of tissue distribution, produced by albumen secretory cells. Found in developing eggs.

The protein localises to the secreted. The protein resides in the target cell membrane. Its function is as follows. The egg defensive protein perivitellin-2 is a pore-forming two-subunit glycoprotein that affects both the nervous and digestive systems of mammals. In addition, it is a source of both structural and energetic molecules during embryonic development. The tachylectin subunit (31 kDa) binds target membranes while the MACPF subunit (67 kDa) disrupts lipid bilayers forming large pores (inner diameter of about 5.6 nm) altering the plasma membrance conductance. Both in vivo and in vitro, the protein shows wide pH range stability and is resistant to enzymatic proteolysis from gastrointestinal environments. It is cytotoxic to both epithelial and immune cells from the digestive system of mammals. It induces enterocyte death by a lytic mechanism and disrupts enterocyte monolayers in a dose-dependent manner. After oral administration to mice, it binds enterocytes and induces large dose-dependent morphological changes on their small intestine mucosa, reducing the absorptive surface. Additionally, it is detected in the Peyer's patches where it activates lymphoid follicles and triggers apoptosis. The toxin can also traverse the intestinal barrier and induce oral adaptive immunity with evidence of circulating antibody response. The toxin also shows hemagglutination properties thanks to the tachylectin subunit, but has no hemolytic activity. In addition to enterotoxin activity, the toxin also acts as a neurotoxin, since an intraperitoneal injection can induce paralysis of the mice rear limbs, followed by death. The protein is Perivitellin-2 67 kDa subunit of Pomacea maculata (Giant applesnail).